Here is a 407-residue protein sequence, read N- to C-terminus: E3 ubiquitin-protein ligase TRIM13 (407 aa).

The segment at 10–58 (CPICCSLFDDPRVLPCSHNFCKKCLEGLLEGNVRNSLWRPSPFKCPTCR) adopts an RING-type zinc-finger fold. Residues 89–131 (PKMPVCKEHLGQPLNIFCVTDMQLICGVCATRGSHTKHVFSSI) form a B box-type zinc finger. Positions 94, 97, 117, and 123 each coordinate Zn(2+). Residues 172-200 (LQLLTKDSDKVKEFFEKLQHTLDQKKNEI) adopt a coiled-coil conformation. The helical transmembrane segment at 316 to 336 (LLLMAVVLLGLLVFFGPTVFL) threads the bilayer.

In terms of assembly, interacts (via C-terminal domain) with VCP. Interacts with AKT1; the interaction ubiquitinates AKT1 and leads to its proteasomal degradation. Interacts with MDM2; the interaction ubiquitinates AKT1 and leads to its proteasomal degradation. Interacts with p62/SQSTM1. Interacts with TRAF6. Interacts with IKBKG/NEMO. In terms of processing, auto-ubiquitinated; requires the RING-type zinc finger. Auto-polyubiquitination leads to proteasomal degradation.

Its subcellular location is the endoplasmic reticulum membrane. The enzyme catalyses S-ubiquitinyl-[E2 ubiquitin-conjugating enzyme]-L-cysteine + [acceptor protein]-L-lysine = [E2 ubiquitin-conjugating enzyme]-L-cysteine + N(6)-ubiquitinyl-[acceptor protein]-L-lysine.. It participates in protein modification; protein ubiquitination. Its function is as follows. Endoplasmic reticulum (ER) membrane anchored E3 ligase involved in the retrotranslocation and turnover of membrane and secretory proteins from the ER through a set of processes named ER-associated degradation (ERAD). This process acts on misfolded proteins as well as in the regulated degradation of correctly folded proteins. Enhances ionizing radiation-induced p53/TP53 stability and apoptosis via ubiquitinating MDM2 and AKT1 and decreasing AKT1 kinase activity through MDM2 and AKT1 proteasomal degradation. Regulates ER stress-induced autophagy, and may act as a tumor suppressor. Also plays a role in innate immune response by stimulating NF-kappa-B activity in the TLR2 signaling pathway. Ubiquitinates TRAF6 via the 'Lys-29'-linked polyubiquitination chain resulting in NF-kappa-B activation. Participates as well in T-cell receptor-mediated NF-kappa-B activation. In the presence of TNF, modulates the IKK complex by regulating IKBKG/NEMO ubiquitination leading to the repression of NF-kappa-B. In Rattus norvegicus (Rat), this protein is E3 ubiquitin-protein ligase TRIM13 (Trim13).